The sequence spans 765 residues: 1,4-alpha-glucan branching enzyme GlgB (765 aa).

The active-site Nucleophile is Asp431. Catalysis depends on Glu484, which acts as the Proton donor.

Belongs to the glycosyl hydrolase 13 family. GlgB subfamily. In terms of assembly, monomer.

It catalyses the reaction Transfers a segment of a (1-&gt;4)-alpha-D-glucan chain to a primary hydroxy group in a similar glucan chain.. The protein operates within glycan biosynthesis; glycogen biosynthesis. In terms of biological role, catalyzes the formation of the alpha-1,6-glucosidic linkages in glycogen by scission of a 1,4-alpha-linked oligosaccharide from growing alpha-1,4-glucan chains and the subsequent attachment of the oligosaccharide to the alpha-1,6 position. The sequence is that of 1,4-alpha-glucan branching enzyme GlgB from Synechococcus sp. (strain CC9605).